The sequence spans 263 residues: Outer membrane lipoprotein 3 (263 aa).

The N-terminal stretch at 1–19 (MKIMKLAGAVAIFSLFLTA) is a signal peptide. The N-palmitoyl cysteine moiety is linked to residue C20. C20 is lipidated: S-diacylglycerol cysteine.

Belongs to the NlpA lipoprotein family.

It localises to the cell outer membrane. The polypeptide is Outer membrane lipoprotein 3 (plpC) (Mannheimia haemolytica (Pasteurella haemolytica)).